Consider the following 271-residue polypeptide: Expansin-B1 (271 aa).

The N-terminal stretch at 1–24 (MQLFPVILPTLCVFLHLLISGSGS) is a signal peptide. An Expansin-like EG45 domain is found at 58–169 (GGACGYGSLV…RRTACKYRGK (112 aa)). Intrachain disulfides connect Cys61/Cys90, Cys93/Cys164, and Cys98/Cys104. The region spanning 182-263 (YWLSLLIEYE…NWVPKATYTS (82 aa)) is the Expansin-like CBD domain. Residue Asn242 is glycosylated (N-linked (GlcNAc...) asparagine).

It belongs to the expansin family. Expansin B subfamily.

The protein localises to the secreted. It localises to the cell wall. It is found in the membrane. In terms of biological role, may cause loosening and extension of plant cell walls by disrupting non-covalent bonding between cellulose microfibrils and matrix glucans. No enzymatic activity has been found. The chain is Expansin-B1 (EXPB1) from Arabidopsis thaliana (Mouse-ear cress).